Reading from the N-terminus, the 342-residue chain is MRSLIEVQRKLLPELLSVMQKRYQILQYIRLMQPIGRRNLAVSLGLTERVLRSEVTFLKEQDLIDIYPSGMTLTNEGELLLAELEEVMKEVSGLRLLETTLKEAFSLSEVVVVSGDSDQSPWVKNEMGRASVSCIKERLVGKKNTVAVTGGTTLAAVAEMMTPDLKHPDVLFVPARGGLGENVQNQANTICAKMAEKSMSHYRLLHVPDQLSDEAYRSIIGEPSIKDMLHLIKSAGMVVHGIGDAMTMAERRKTPQADLEKVKNGHAVGEAFGYYFNHQGEVVHKVKTVGIQLDDLKNNKCVIAVAGGSSKAKAIKAFMQQAHDSILITDEGAAKELVRDFN.

The H-T-H motif DNA-binding region spans 37 to 56; it reads RRNLAVSLGLTERVLRSEVT.

The protein belongs to the SorC transcriptional regulatory family. Homotetramer.

In the absence of glucose, represses the transcription of the gapA operon, which encodes five key glycolytic enzymes. The protein is Central glycolytic genes regulator (cggR) of Priestia megaterium (strain DSM 319 / IMG 1521) (Bacillus megaterium).